The primary structure comprises 402 residues: Exodeoxyribonuclease 7 large subunit (402 aa).

It belongs to the XseA family. Heterooligomer composed of large and small subunits.

The protein resides in the cytoplasm. The enzyme catalyses Exonucleolytic cleavage in either 5'- to 3'- or 3'- to 5'-direction to yield nucleoside 5'-phosphates.. In terms of biological role, bidirectionally degrades single-stranded DNA into large acid-insoluble oligonucleotides, which are then degraded further into small acid-soluble oligonucleotides. In Streptomyces coelicolor (strain ATCC BAA-471 / A3(2) / M145), this protein is Exodeoxyribonuclease 7 large subunit.